The following is a 418-amino-acid chain: Glucose-1-phosphate adenylyltransferase (418 aa).

Alpha-D-glucose 1-phosphate is bound by residues tyrosine 104, glycine 169, 184–185 (EK), and serine 202.

The protein belongs to the bacterial/plant glucose-1-phosphate adenylyltransferase family. Homotetramer.

The catalysed reaction is alpha-D-glucose 1-phosphate + ATP + H(+) = ADP-alpha-D-glucose + diphosphate. The protein operates within glycan biosynthesis; glycogen biosynthesis. In terms of biological role, involved in the biosynthesis of ADP-glucose, a building block required for the elongation reactions to produce glycogen. Catalyzes the reaction between ATP and alpha-D-glucose 1-phosphate (G1P) to produce pyrophosphate and ADP-Glc. The polypeptide is Glucose-1-phosphate adenylyltransferase (Jannaschia sp. (strain CCS1)).